Here is a 275-residue protein sequence, read N- to C-terminus: Large ribosomal subunit protein uL2 (275 aa).

A disordered region spans residues 224 to 257 (AMNPIDHPHGGGEGRTAAGRDPVSPWGTPTKGFR).

The protein belongs to the universal ribosomal protein uL2 family. As to quaternary structure, part of the 50S ribosomal subunit. Forms a bridge to the 30S subunit in the 70S ribosome.

Its function is as follows. One of the primary rRNA binding proteins. Required for association of the 30S and 50S subunits to form the 70S ribosome, for tRNA binding and peptide bond formation. It has been suggested to have peptidyltransferase activity; this is somewhat controversial. Makes several contacts with the 16S rRNA in the 70S ribosome. The protein is Large ribosomal subunit protein uL2 of Burkholderia mallei (strain NCTC 10247).